The following is a 394-amino-acid chain: Elongation factor Tu 2 (394 aa).

The region spanning 10–204 (KPHVNVGTIG…ALDTYIPEPE (195 aa)) is the tr-type G domain. The interval 19 to 26 (GHVDHGKT) is G1. 19–26 (GHVDHGKT) serves as a coordination point for GTP. Thr26 serves as a coordination point for Mg(2+). The interval 60–64 (GITIS) is G2. A G3 region spans residues 81-84 (DCPG). GTP contacts are provided by residues 81–85 (DCPGH) and 136–139 (NKCD). Residues 136 to 139 (NKCD) form a G4 region. Residues 174-176 (SAL) are G5.

It belongs to the TRAFAC class translation factor GTPase superfamily. Classic translation factor GTPase family. EF-Tu/EF-1A subfamily. In terms of assembly, monomer.

It localises to the cytoplasm. The catalysed reaction is GTP + H2O = GDP + phosphate + H(+). Its function is as follows. GTP hydrolase that promotes the GTP-dependent binding of aminoacyl-tRNA to the A-site of ribosomes during protein biosynthesis. The sequence is that of Elongation factor Tu 2 from Vibrio vulnificus (strain CMCP6).